A 700-amino-acid chain; its full sequence is Chondroitinase-AC (700 aa).

A signal peptide spans 1–22 (MKKLFVTCIVFFSILSPALLIA). Catalysis depends on residues histidine 225, tyrosine 234, and arginine 288. O-linked (Man...) serine glycosylation occurs at serine 328. Ca(2+)-binding residues include glutamate 405, aspartate 407, aspartate 416, and tyrosine 417. O-linked (Man...) serine glycosylation occurs at serine 455.

The protein belongs to the polysaccharide lyase 8 family. In terms of assembly, monomer. Requires Ca(2+) as cofactor.

It carries out the reaction Eliminative degradation of polysaccharides containing 1,4-beta-D-hexosaminyl and 1,3-beta-D-glucuronosyl linkages to disaccharides containing 4-deoxy-beta-D-gluc-4-enuronosyl groups.. This Pedobacter heparinus (strain ATCC 13125 / DSM 2366 / CIP 104194 / JCM 7457 / NBRC 12017 / NCIMB 9290 / NRRL B-14731 / HIM 762-3) protein is Chondroitinase-AC (cslA).